A 453-amino-acid polypeptide reads, in one-letter code: Adenylyltransferase and sulfurtransferase MOCS3 (453 aa).

The residue at position 62 (Thr-62) is a Phosphothreonine. ATP contacts are provided by residues Gly-101, Asp-122, 129-133 (SNFHR), Lys-146, and 190-191 (DN). The Zn(2+) site is built by Cys-231 and Cys-234. The Glycyl thioester intermediate; for adenylyltransferase activity role is filled by Cys-248. Residues Cys-306 and Cys-309 each coordinate Zn(2+). The Rhodanese domain occupies 355–451 (QAQPHLLIDV…WTNSVDPSFP (97 aa)). Cys-410 (cysteine persulfide intermediate; for sulfurtransferase activity) is an active-site residue.

It in the N-terminal section; belongs to the HesA/MoeB/ThiF family. UBA4 subfamily. Requires Zn(2+) as cofactor.

It is found in the cytoplasm. Its subcellular location is the cytosol. It carries out the reaction [molybdopterin-synthase sulfur-carrier protein]-C-terminal Gly-Gly + ATP + H(+) = [molybdopterin-synthase sulfur-carrier protein]-C-terminal Gly-Gly-AMP + diphosphate. The enzyme catalyses [molybdopterin-synthase sulfur-carrier protein]-C-terminal Gly-Gly-AMP + S-sulfanyl-L-cysteinyl-[cysteine desulfurase] + AH2 = [molybdopterin-synthase sulfur-carrier protein]-C-terminal-Gly-aminoethanethioate + L-cysteinyl-[cysteine desulfurase] + A + AMP + 2 H(+). Its pathway is tRNA modification; 5-methoxycarbonylmethyl-2-thiouridine-tRNA biosynthesis. It functions in the pathway cofactor biosynthesis; molybdopterin biosynthesis. Its function is as follows. Plays a central role in 2-thiolation of mcm(5)S(2)U at tRNA wobble positions of cytosolic tRNA(Lys), tRNA(Glu) and tRNA(Gln). Also essential during biosynthesis of the molybdenum cofactor. Acts by mediating the C-terminal thiocarboxylation of sulfur carriers URM1 and MOCS2A. Its N-terminus first activates URM1 and MOCS2A as acyl-adenylates (-COAMP), then the persulfide sulfur on the catalytic cysteine is transferred to URM1 and MOCS2A to form thiocarboxylation (-COSH) of their C-terminus. The reaction probably involves hydrogen sulfide that is generated from the persulfide intermediate and that acts as a nucleophile towards URM1 and MOCS2A. Subsequently, a transient disulfide bond is formed. Does not use thiosulfate as sulfur donor; NFS1 probably acting as a sulfur donor for thiocarboxylation reactions. In Drosophila yakuba (Fruit fly), this protein is Adenylyltransferase and sulfurtransferase MOCS3.